Consider the following 163-residue polypeptide: Nucleotide-binding protein cbdbA1256 (163 aa).

The protein belongs to the YajQ family.

Its function is as follows. Nucleotide-binding protein. The sequence is that of Nucleotide-binding protein cbdbA1256 from Dehalococcoides mccartyi (strain CBDB1).